A 389-amino-acid chain; its full sequence is MGTNLSVPNPLGFFPDHQLDPAFGANSTNPDWDFNPIKDHWPQANQVGVGAFGPGHSPPHGGVLGWSPQAQGILTTVPTVPPTASTNRQSGRQPTPISPPLRDSHPQAMQWNSTALHQALQDPRVRGLYFPAGGSSSGTLNPVPNTASHISSISSRTGDPALNMENITSGFLGPLLVLQAGFFLLTRILTIPQSLDSWWTSLNFLGGSPVCLGQNSQYPTSNHSPTSCPPICPGYRWMCLRRFIIFLFILLLCLIFLLVLLDYQGMLPVCPLIPGSTTTSTGPCKTCTTPAQGNSMFPSCCCTKPTDGNCTCIPIPSSWAFAKYLWEWASVRFSWLSLLVPFVQWFVGLSPTVWLSVIWMMWYWGPSLYNIVSPFIPLLPIFFCLWVYI.

Position 1 is an N-acetylmethionine (Met1). Gly2 carries the N-myristoyl glycine; by host lipid modification. Residues 2-108 (GTNLSVPNPL…PPLRDSHPQA (107 aa)) are pre-S1. Residues 2–163 (GTNLSVPNPL…SSRTGDPALN (162 aa)) form a pre-S region. Topologically, residues 2-170 (GTNLSVPNPL…ALNMENITSG (169 aa)) are virion surface; in external conformation. Residues 2-242 (GTNLSVPNPL…PGYRWMCLRR (241 aa)) lie on the Intravirion; in internal conformation side of the membrane. A disordered region spans residues 79–103 (TVPPTASTNRQSGRQPTPISPPLRD). The segment covering 84 to 95 (ASTNRQSGRQPT) has biased composition (polar residues). Residues 109–163 (MQWNSTALHQALQDPRVRGLYFPAGGSSSGTLNPVPNTASHISSISSRTGDPALN) are pre-S2. Residues 171 to 191 (FLGPLLVLQAGFFLLTRILTI) form a helical membrane-spanning segment. Over 192–242 (PQSLDSWWTSLNFLGGSPVCLGQNSQYPTSNHSPTSCPPICPGYRWMCLRR) the chain is Intravirion; in external conformation. The chain crosses the membrane as a helical span at residues 243-263 (FIIFLFILLLCLIFLLVLLDY). Topologically, residues 264-337 (QGMLPVCPLI…WASVRFSWLS (74 aa)) are virion surface. Asn309 is a glycosylation site (N-linked (GlcNAc...) asparagine; by host). A helical transmembrane segment spans residues 338-358 (LLVPFVQWFVGLSPTVWLSVI). The Intravirion portion of the chain corresponds to 359–364 (WMMWYW). Residues 365–387 (GPSLYNIVSPFIPLLPIFFCLWV) traverse the membrane as a helical segment. Residues 388–389 (YI) lie on the Virion surface side of the membrane.

This sequence belongs to the orthohepadnavirus major surface antigen family. In terms of assembly, in its internal form (Li-HBsAg), interacts with the capsid protein and with the isoform S. Interacts with host chaperone CANX. As to quaternary structure, associates with host chaperone CANX through its pre-S2 N glycan; this association may be essential for isoform M proper secretion. Interacts with isoform L. Interacts with the antigens of satellite virus HDV (HDVAgs); this interaction is required for encapsidation of HDV genomic RNA. In terms of processing, isoform M is N-terminally acetylated by host at a ratio of 90%, and N-glycosylated by host at the pre-S2 region. Myristoylated.

Its subcellular location is the virion membrane. The large envelope protein exists in two topological conformations, one which is termed 'external' or Le-HBsAg and the other 'internal' or Li-HBsAg. In its external conformation the protein attaches the virus to cell receptors and thereby initiating infection. This interaction determines the species specificity and liver tropism. This attachment induces virion internalization predominantly through caveolin-mediated endocytosis. The large envelope protein also assures fusion between virion membrane and endosomal membrane. In its internal conformation the protein plays a role in virion morphogenesis and mediates the contact with the nucleocapsid like a matrix protein. Functionally, the middle envelope protein plays an important role in the budding of the virion. It is involved in the induction of budding in a nucleocapsid independent way. In this process the majority of envelope proteins bud to form subviral lipoprotein particles of 22 nm of diameter that do not contain a nucleocapsid. The sequence is that of Large envelope protein from Hepatitis B virus genotype A1 subtype adw2 (isolate South Africa/84/2001) (HBV-A).